A 407-amino-acid polypeptide reads, in one-letter code: MAYQEPNKDGFYGKFGGRFVPETLMTAVLELEKAYRESQADPSFQEELNQLLRQYVGRETPLYYAKNLTQHIGGAKIYLKREDLNHTGAHKINNALGQVWLAKRMGKKKIIAETGAGQHGVATATAAALFNMECTIYMGEEDVKRQALNVFRMELLGAKVEAVTDGSRVLKDAVNAALRSWVANIDDTHYILGSALGPHPFPEIVRDFQSVIGREAKQQYRDLTGQNLPDALVACVGGGSNAIGLFHPFVEDESVAMYGAEAAGFGVDTEHHAATLTKGRPGVLHGSLMDVLQDAHGQILEAFSISAGLDYPGIGPEHSHYHDIKRASYVPVTDEEALEGFQLLSRVEGIIPALESSHAIAFAVKLAKELGPEKSMIVCLSGRGDKDVVQVKDRLEADAAKKGEAHA.

Lysine 91 is subject to N6-(pyridoxal phosphate)lysine.

Belongs to the TrpB family. In terms of assembly, tetramer of two alpha and two beta chains. Requires pyridoxal 5'-phosphate as cofactor.

It carries out the reaction (1S,2R)-1-C-(indol-3-yl)glycerol 3-phosphate + L-serine = D-glyceraldehyde 3-phosphate + L-tryptophan + H2O. Its pathway is amino-acid biosynthesis; L-tryptophan biosynthesis; L-tryptophan from chorismate: step 5/5. In terms of biological role, the beta subunit is responsible for the synthesis of L-tryptophan from indole and L-serine. This Streptococcus pneumoniae (strain Taiwan19F-14) protein is Tryptophan synthase beta chain.